A 223-amino-acid polypeptide reads, in one-letter code: Kinetochore protein Spc25 (223 aa).

Positions 51 to 116 (RHQRKVGKLQ…QRKNEIMERI (66 aa)) form a coiled coil.

The protein belongs to the SPC25 family. In terms of assembly, component of the Ndc80 complex, which is composed of Ndc80, Nuf2 and Spc25.

Its subcellular location is the nucleus. It localises to the chromosome. The protein resides in the centromere. It is found in the kinetochore. Functionally, acts as a component of the essential kinetochore-associated Ndc80 complex, which is required for chromosome segregation and spindle checkpoint activity during meiosis and mitosis. Required for kinetochore integrity and the organization of stable microtubule binding sites in the outer plate of the kinetochore. Participates in SAC signaling that responds specifically to disruptions in spindle microtubule dynamics. The NDC80 complex synergistically enhances the affinity of the SKA1 complex for microtubules and may allow the NDC80 complex to track depolymerizing microtubules. The polypeptide is Kinetochore protein Spc25 (Drosophila yakuba (Fruit fly)).